Here is a 556-residue protein sequence, read N- to C-terminus: Formate--tetrahydrofolate ligase 2 (556 aa).

Residue 65-72 (TPAGEGKS) coordinates ATP.

Belongs to the formate--tetrahydrofolate ligase family.

It carries out the reaction (6S)-5,6,7,8-tetrahydrofolate + formate + ATP = (6R)-10-formyltetrahydrofolate + ADP + phosphate. It functions in the pathway one-carbon metabolism; tetrahydrofolate interconversion. The polypeptide is Formate--tetrahydrofolate ligase 2 (Streptococcus sanguinis (strain SK36)).